The following is a 1096-amino-acid chain: Protein spire (1096 aa).

2 disordered regions span residues 1–79 and 184–211; these read MTEH…GNGT and VESQEQEASQQEQQQKQPQMDDSATSSV. Over residues 37 to 51 the composition is skewed to polar residues; the sequence is LSTSPDSANGDAQQA. Basic residues predominate over residues 53 to 65; it reads THTHIISHTHSKG. Composition is skewed to low complexity over residues 66-77 and 189-201; these read AAKTQTQTQNGN and QEASQQEQQQKQP. Positions 111 to 366 constitute a KIND domain; sequence VTLNNILDSF…RALATETIEL (256 aa). Positions 315–340 form a coiled coil; it reads KRWDDEAEEERNDTKELEHIIETCRN. WH2 domains follow at residues 436-454 and 500-517; these read PYEILMGDIRAKKYQLRKV and PREQLMESIRQGKELKQI. 3 disordered regions span residues 560-588, 614-656, and 693-762; these read DDSSMSSSHSTAATHQHHQQHQPHHAHLA, QECQ…PSFT, and QSNL…LGPW. The span at 574–585 shows a compositional bias: basic residues; it reads HQHHQQHQPHHA. 2 stretches are compositionally biased toward low complexity: residues 633–645 and 714–725; these read APRQTLPQPQAQA and DAGSQSQSGASS. Residues 737 to 754 are compositionally biased toward basic and acidic residues; that stretch reads EGDHSQTTDGPPRLDEAH. Positions 780-800 are spir-box; that stretch reads LSVTLAEIVHIRSVMTKAELE. The span at 874–894 shows a compositional bias: low complexity; sequence PASSSTPSPSHHAHQAHSSST. Disordered regions lie at residues 874 to 899, 912 to 958, and 997 to 1021; these read PASSSTPSPSHHAHQAHSSSTGNIMD, RSES…APGH, and RSMEGPRSLPVHSPAYRPLSNSSTL. The segment covering 921-941 has biased composition (polar residues); it reads STVGSAPSSPKHQRSNMSTPG.

The protein belongs to the spire family. In terms of assembly, interacts with bsk, Rho1, Rac1, Cdc42 and wash. Interacts with capu. Phosphorylated by Jnk kinase (bsk).

It localises to the cytoplasm. The protein localises to the cytoskeleton. It is found in the perinuclear region. The protein resides in the cell membrane. Its subcellular location is the cytoplasmic vesicle membrane. Acts as an actin nucleation factor, remains associated with the slow-growing pointed end of the new filament. Promotes dissociation of capu from the barbed end of actin filaments. Involved in intracellular vesicle transport along actin fibers, providing a novel link between actin cytoskeleton dynamics and intracellular transport. Required for localization of determinants within the developing oocyte to the posterior pole and to the dorsal anterior corner. Links Rho family signaling and Jnk function to the actin cytoskeleton. The protein is Protein spire of Drosophila pseudoobscura pseudoobscura (Fruit fly).